A 250-amino-acid polypeptide reads, in one-letter code: Small ribosomal subunit protein uS3 (250 aa).

The 71-residue stretch at 39–109 (IRNYVQARLK…EVKIDVVEVI (71 aa)) folds into the KH type-2 domain. Residues 225 to 239 (INERRGDSKSRPRDP) show a composition bias toward basic and acidic residues. Positions 225–250 (INERRGDSKSRPRDPRNKRRRRTKRS) are disordered. The segment covering 240-250 (RNKRRRRTKRS) has biased composition (basic residues).

Belongs to the universal ribosomal protein uS3 family. As to quaternary structure, part of the 30S ribosomal subunit. Forms a tight complex with proteins S10 and S14.

Its function is as follows. Binds the lower part of the 30S subunit head. Binds mRNA in the 70S ribosome, positioning it for translation. This is Small ribosomal subunit protein uS3 from Chlorobium phaeobacteroides (strain DSM 266 / SMG 266 / 2430).